We begin with the raw amino-acid sequence, 706 residues long: Protein MAM3 (706 aa).

The Vacuolar segment spans residues 1 to 16 (MSFLPLRSRSRSGAPH). The helical transmembrane segment at 17–37 (WVYIILYHIFTIPKIYSLPLL) threads the bilayer. At 38 to 65 (SGSHVLNSRDVADSGHSVGDEASVTTYY) the chain is on the cytoplasmic side. The 184-residue stretch at 57–240 (DEASVTTYYI…MGVERLTKDE (184 aa)) folds into the CNNM transmembrane domain. The helical transmembrane segment at 66–86 (IISIILVLLGGVFAGLTLGLM) threads the bilayer. The Vacuolar segment spans residues 87 to 120 (GQDEVYLKVISTSGSNSEKKLAKRVLDLISRGKH). A helical membrane pass occupies residues 121–141 (WVLVTLLLSNVITNETLPIVL). Topologically, residues 142–145 (DRCL) are cytoplasmic. Residues 146–166 (GGGWQAVVSSTILIVIFGEII) form a helical membrane-spanning segment. The Vacuolar segment spans residues 167–177 (PQSVCVKYGLQ). Residues 178 to 198 (VGAFFCPFVLVLMYLMYPVAY) form a helical membrane-spanning segment. Residues 199–706 (PIATLLDYML…ANGSSSTIKR (508 aa)) are Cytoplasmic-facing. CBS domains lie at 259–320 (MTPI…DCLP) and 321–386 (ISHF…IVDE). Disordered regions lie at residues 421-495 (SHKE…ASNP), 515-540 (ITTH…LSAE), and 557-597 (LHTQ…ENQN). The segment covering 433 to 445 (ESSPLLSPSNSNH) has biased composition (low complexity). Residues S439 and S447 each carry the phosphoserine modification. Polar residues predominate over residues 472 to 495 (AVLSPTPQVTEHGTIIPSNLASNP). S527 bears the Phosphoserine mark. The segment covering 566–575 (TQVTTSTKTT) has biased composition (low complexity). Positions 576–597 (RNSPDSISIPNSGANHGNENQN) are enriched in polar residues. Phosphoserine is present on S603. Y604 carries the phosphotyrosine modification. T607 bears the Phosphothreonine mark. The residue at position 614 (S614) is a Phosphoserine. Residues 626-706 (IGPAKDWDES…ANGSSSTIKR (81 aa)) are disordered. Residues 630–639 (KDWDESKSEY) are compositionally biased toward basic and acidic residues. A compositionally biased stretch (low complexity) spans 658 to 680 (SSSNASLFSSIKNKFKNENANNN). Over residues 681 to 706 (DRSNFTDSLSRTSNYDANGSSSTIKR) the composition is skewed to polar residues.

Belongs to the ACDP family.

The protein localises to the vacuole membrane. Involved in metal homeostasis and more specially in manganese sensitivity. The chain is Protein MAM3 (MAM3) from Saccharomyces cerevisiae (strain ATCC 204508 / S288c) (Baker's yeast).